We begin with the raw amino-acid sequence, 22 residues long: Mu-conotoxin CnIIIC (22 aa).

A Pyrrolidone carboxylic acid; partial modification is found at Gln-1. Disulfide bonds link Cys-3/Cys-15, Cys-4/Cys-21, and Cys-10/Cys-22. Residue Cys-22 is modified to Cysteine amide.

Belongs to the conotoxin M superfamily. As to expression, expressed by the venom duct.

Its subcellular location is the secreted. In terms of biological role, mu-conotoxins block voltage-gated sodium channels (Nav). This synthetic toxin blocks both voltage-gated sodium channels and nicotinic acetylcholine receptor (nAChR). Inhibits the skeletal muscle rNav1.4/SCN4A (IC(50)=1.3 nM) and the brain rNav1.2/SCN2A in a long-lasting manner. A low inhibition is also observed on neuronal mNav1.6/SCN8A and mNav1.7/SCN9A. Modestly blocks nAChR alpha-3/beta-2 subtype (IC(50)=450 nM) (partially reversible) and, to a lesser extent, alpha-7 and alpha-4/beta-2 subtypes (reversible). In vitro, decreases twitch tension in mouse hemidiaphragms (IC(50)=150 nM), and displays a high blocking effect in mouse extensor digitorum longus muscles (IC(50)=46 nM). In Conus consors (Singed cone), this protein is Mu-conotoxin CnIIIC.